The sequence spans 389 residues: Phospho-N-acetylmuramoyl-pentapeptide-transferase (389 aa).

10 consecutive transmembrane segments (helical) span residues R25–I45, T73–L93, F97–Y117, F135–A155, I190–A210, G222–M242, G258–W278, V286–I306, I311–V331, and Q366–L386.

Belongs to the glycosyltransferase 4 family. MraY subfamily. The cofactor is Mg(2+).

The protein resides in the cell inner membrane. It carries out the reaction UDP-N-acetyl-alpha-D-muramoyl-L-alanyl-gamma-D-glutamyl-meso-2,6-diaminopimeloyl-D-alanyl-D-alanine + di-trans,octa-cis-undecaprenyl phosphate = di-trans,octa-cis-undecaprenyl diphospho-N-acetyl-alpha-D-muramoyl-L-alanyl-D-glutamyl-meso-2,6-diaminopimeloyl-D-alanyl-D-alanine + UMP. Its pathway is cell wall biogenesis; peptidoglycan biosynthesis. Catalyzes the initial step of the lipid cycle reactions in the biosynthesis of the cell wall peptidoglycan: transfers peptidoglycan precursor phospho-MurNAc-pentapeptide from UDP-MurNAc-pentapeptide onto the lipid carrier undecaprenyl phosphate, yielding undecaprenyl-pyrophosphoryl-MurNAc-pentapeptide, known as lipid I. This chain is Phospho-N-acetylmuramoyl-pentapeptide-transferase, found in Burkholderia pseudomallei (strain 1106a).